We begin with the raw amino-acid sequence, 185 residues long: MMTPENDEEQTSVFSATVYGDKIQGKNKRKRVIGLCIRISMVISLLSMITMSAFLIVRLNQCMSANEAAITDAAVAVAAASSTHRKVASSTTQYDHKESCNGLYYQGSCYILHSDYQLFSDAKANCTAESSTLPNKSDVLITWLIDYVEDTWGSDGNPITKTTSDYQDSDVSQEVRKYFCVKTMN.

The Intravirion segment spans residues 1–33 (MMTPENDEEQTSVFSATVYGDKIQGKNKRKRVI). A helical membrane pass occupies residues 34–56 (GLCIRISMVISLLSMITMSAFLI). The Virion surface portion of the chain corresponds to 57–185 (VRLNQCMSAN…RKYFCVKTMN (129 aa)). Residues 98–185 (ESCNGLYYQG…RKYFCVKTMN (88 aa)) form a C-type lectin-like domain region. N125 and N135 each carry an N-linked (GlcNAc...) asparagine; by host glycan.

This sequence belongs to the orthopoxvirus OPG161 family. As to quaternary structure, homodimer, disulfide-linked. Interacts with protein OPG190. Interacts (via C-terminus) with protein OPG164. Interacts with OPG162.

It localises to the virion membrane. The protein resides in the host membrane. Forms a complex with OPG162 and OPG190 to coordinate the incorporation of OPG164 into wrapped enveloped virion (EV) membranes and, subsequently, the production of actin tails. Therefore plays an essential role in efficient cell-to-cell spread of viral particles. The polypeptide is Protein OPG161 (OPG161) (Homo sapiens (Human)).